A 173-amino-acid polypeptide reads, in one-letter code: Shikimate kinase 2 (173 aa).

Residue 12–17 (GCGKTT) coordinates ATP. Mg(2+)-binding residues include threonine 16 and aspartate 32. Positions 34, 58, and 79 each coordinate substrate. Residues 112–126 (EENPQDNQRPTLTGR) form an LID domain region. Arginine 120 is a binding site for ATP. Arginine 139 serves as a coordination point for substrate. Glutamine 155 contacts ATP.

It belongs to the shikimate kinase family. AroL subfamily. In terms of assembly, monomer. Mg(2+) serves as cofactor.

The protein resides in the cytoplasm. The catalysed reaction is shikimate + ATP = 3-phosphoshikimate + ADP + H(+). The protein operates within metabolic intermediate biosynthesis; chorismate biosynthesis; chorismate from D-erythrose 4-phosphate and phosphoenolpyruvate: step 5/7. Catalyzes the specific phosphorylation of the 3-hydroxyl group of shikimic acid using ATP as a cosubstrate. In Pectobacterium atrosepticum (strain SCRI 1043 / ATCC BAA-672) (Erwinia carotovora subsp. atroseptica), this protein is Shikimate kinase 2.